Reading from the N-terminus, the 86-residue chain is U22-theraphotoxin-Cg1a (86 aa).

The first 20 residues, 1–20 (MKVSVVLAITVLALLSVAYA), serve as a signal peptide directing secretion. Positions 21-51 (SEFEEKELVKEVVRTIFLGKEDAALREETDR) are excised as a propeptide. Cystine bridges form between C53–C67, C60–C72, and C66–C79. Phenylalanine amide is present on F85.

This sequence belongs to the neurotoxin 10 (Hwtx-1) family. 42 (Jztx-44) subfamily. As to expression, expressed by the venom gland.

The protein resides in the secreted. In terms of biological role, probable ion channel inhibitor. This Chilobrachys guangxiensis (Chinese earth tiger tarantula) protein is U22-theraphotoxin-Cg1a.